The following is a 692-amino-acid chain: Polyribonucleotide nucleotidyltransferase (692 aa).

Positions 484 and 490 each coordinate Mg(2+). One can recognise a KH domain in the interval 551-614 (PKYFIHKISQ…ALVERVKSIT (64 aa)). Positions 620-688 (GAVYTGKVKT…NRGRIRLSRK (69 aa)) constitute an S1 motif domain.

The protein belongs to the polyribonucleotide nucleotidyltransferase family. Mg(2+) serves as cofactor.

It is found in the cytoplasm. The enzyme catalyses RNA(n+1) + phosphate = RNA(n) + a ribonucleoside 5'-diphosphate. Functionally, involved in mRNA degradation. Catalyzes the phosphorolysis of single-stranded polyribonucleotides processively in the 3'- to 5'-direction. The protein is Polyribonucleotide nucleotidyltransferase of Desulfotalea psychrophila (strain LSv54 / DSM 12343).